A 674-amino-acid polypeptide reads, in one-letter code: Cysteine-rich receptor-like protein kinase 6 (674 aa).

Positions Met-1–Ala-24 are cleaved as a signal peptide. Residues Gln-25–Val-289 lie on the Extracellular side of the membrane. Gnk2-homologous domains lie at Phe-28–Ile-132 and Asn-139–Phe-245. Asn-36, Asn-43, Asn-61, Asn-70, Asn-104, Asn-178, and Asn-247 each carry an N-linked (GlcNAc...) asparagine glycan. Residues Pro-254–Arg-266 show a composition bias toward pro residues. Residues Pro-254–Ser-284 form a disordered region. Residues Ser-268–Ser-284 show a composition bias toward low complexity. N-linked (GlcNAc...) asparagine glycosylation is present at Asn-286. The helical transmembrane segment at Leu-290–Phe-310 threads the bilayer. The Cytoplasmic portion of the chain corresponds to Leu-311 to Arg-674. The Protein kinase domain maps to Phe-351 to Phe-637. ATP contacts are provided by residues Ile-357–Val-365 and Lys-379. A Phosphotyrosine modification is found at Tyr-424. Asp-476 (proton acceptor) is an active-site residue. Ser-480 is subject to Phosphoserine. Thr-516 carries the phosphothreonine modification. Tyr-524 is subject to Phosphotyrosine. A disordered region spans residues Leu-648–Arg-674. The span at Ser-650–Phe-659 shows a compositional bias: polar residues.

This sequence belongs to the protein kinase superfamily. Ser/Thr protein kinase family. CRK subfamily.

It localises to the membrane. The enzyme catalyses L-seryl-[protein] + ATP = O-phospho-L-seryl-[protein] + ADP + H(+). It carries out the reaction L-threonyl-[protein] + ATP = O-phospho-L-threonyl-[protein] + ADP + H(+). The chain is Cysteine-rich receptor-like protein kinase 6 (CRK6) from Arabidopsis thaliana (Mouse-ear cress).